A 407-amino-acid chain; its full sequence is uncharacterized protein (407 aa).

The Lumenal segment spans residues 1-290 (MPLNIIGTAL…SNSLRRVISN (290 aa)). Residues aspartate 114, lysine 236, and serine 281 each coordinate NADP(+). Lysine 236 (lowers pKa of active site Tyr) is an active-site residue. A helical transmembrane segment spans residues 291–311 (GSVVLLIILYCILLYPILWLF). Over 312–407 (TKSGRRGDQS…KSQNKSRKDD (96 aa)) the chain is Cytoplasmic. Residues 361 to 390 (ELQKKLFDNTERDILQLEKKVAAKRNANKT) are a coiled coil. Positions 383–407 (AKRNANKTGNQNSKKKSQNKSRKDD) are disordered. Basic residues predominate over residues 395 to 407 (SKKKSQNKSRKDD).

This sequence belongs to the short-chain dehydrogenases/reductases (SDR) family.

The protein localises to the endoplasmic reticulum membrane. May be involved in lipid metabolism. This is an uncharacterized protein from Saccharomyces cerevisiae (strain ATCC 204508 / S288c) (Baker's yeast).